Here is a 718-residue protein sequence, read N- to C-terminus: MIYQGESIRVDFIEPGFAELQFDAKGSVNKFDQATLEEFSEALTKLQNTDDLRGVIVTSSKSTFIVGADITEFLTLFSDQEKTRSWVAKASRVFDQLEDLPVPTVGAVTGFALGGGCEALLACDYRVADTTATIGLPEVKLGLIPGFGGTMRLPRVIGPDNALEWITTGKNNKALDALKVGAVDAVVEPENLTKAALNLAKAAAAGQQDWKAKRQPKLEPLKANDTELMMTLVTAKGMIAAKAGKHYPAPHKALEAIENGAREHREGALTAENNAFFDLTQTEACQAQVGIFLADQAVKGKSKKYAKAATKEIKTAGVLGAGIMGGGIAYQSALKGVPAVMKDIKQDALDLGMKEAGKILKKGVERGKVNNEKMIKILSSITPTLLNDAVKDVDIVVEAVVENPKVKGSVLAEIEGVIGDDAILTSNTSTISITELAKNLKRPEKFCGMHFFNPVHKMPLVEIIRGEKTSDDTVNAVVAYALKLGKTPIVVNDCPGFLVNRVLFPYLAGFAGMVDEGVDFVGIDKVMEKQFGWPMGPAYLSDVVGIDTADHCTVVMEAGFPTRMKRDESSAIAKLAAAERYGQKNGKGFYVYGTDKKGKPTKEADPATYELLGCEQGKKLDADEVIARCMIPMVNEVVRCLEEDIVGSAAEADMALLYGLGFPPFRGGPFRYLETLGMDNFIQLADKYAHLGEIYQVTDGMREMAKAGKSYFDTTSAK.

Residues 1-188 (MIYQGESIRV…KVGAVDAVVE (188 aa)) form an enoyl-CoA hydratase/isomerase region. Position 295 (Asp295) interacts with substrate. The tract at residues 310-718 (TKEIKTAGVL…KSYFDTTSAK (409 aa)) is 3-hydroxyacyl-CoA dehydrogenase. Residues Met324, Asp343, 400–402 (VVE), Lys407, and Ser429 contribute to the NAD(+) site. His450 (for 3-hydroxyacyl-CoA dehydrogenase activity) is an active-site residue. An NAD(+)-binding site is contributed by Asn453. Asn500 and Tyr658 together coordinate substrate.

This sequence in the N-terminal section; belongs to the enoyl-CoA hydratase/isomerase family. The protein in the C-terminal section; belongs to the 3-hydroxyacyl-CoA dehydrogenase family. Heterotetramer of two alpha chains (FadB) and two beta chains (FadA).

It catalyses the reaction a (3S)-3-hydroxyacyl-CoA + NAD(+) = a 3-oxoacyl-CoA + NADH + H(+). It carries out the reaction a (3S)-3-hydroxyacyl-CoA = a (2E)-enoyl-CoA + H2O. The catalysed reaction is a 4-saturated-(3S)-3-hydroxyacyl-CoA = a (3E)-enoyl-CoA + H2O. The enzyme catalyses (3S)-3-hydroxybutanoyl-CoA = (3R)-3-hydroxybutanoyl-CoA. It catalyses the reaction a (3Z)-enoyl-CoA = a 4-saturated (2E)-enoyl-CoA. It carries out the reaction a (3E)-enoyl-CoA = a 4-saturated (2E)-enoyl-CoA. The protein operates within lipid metabolism; fatty acid beta-oxidation. In terms of biological role, involved in the aerobic and anaerobic degradation of long-chain fatty acids via beta-oxidation cycle. Catalyzes the formation of 3-oxoacyl-CoA from enoyl-CoA via L-3-hydroxyacyl-CoA. It can also use D-3-hydroxyacyl-CoA and cis-3-enoyl-CoA as substrate. This Idiomarina loihiensis (strain ATCC BAA-735 / DSM 15497 / L2-TR) protein is Fatty acid oxidation complex subunit alpha.